We begin with the raw amino-acid sequence, 367 residues long: Protein RIC-3 (367 aa).

Positions 1–31 (MAYSTVQRVALASGLVLAVSLLLPKAFLSRG) are cleaved as a signal peptide. The interval 30 to 67 (RGKRPEPPPGPEGKLDRFPPMMHHHSAPSDGQTPGARF) is disordered. At 32–95 (KRPEPPPGPE…AGGGGSGRGL (64 aa)) the chain is on the lumenal side. Residues 96–116 (MGQIIPIYGFGIFLYILYILF) traverse the membrane as a helical segment. Residues 117 to 367 (KLSKGKTAED…LRKRNPQGFE (251 aa)) lie on the Cytoplasmic side of the membrane. Residues 138 to 169 (HRKITNFELVQLQEKLKETEEAMEKLINRVGP) adopt a coiled-coil conformation. N6-acetyllysine; alternate is present on lysine 201. Lysine 201 participates in a covalent cross-link: Glycyl lysine isopeptide (Lys-Gly) (interchain with G-Cter in ubiquitin); alternate. Disordered regions lie at residues 262–301 (QMGEIEEEGSERLSWDHLPTDPGAQKDNSVAPCDPKPESC) and 322–367 (ADGY…QGFE). Over residues 271–280 (SERLSWDHLP) the composition is skewed to basic and acidic residues. Residues 358-367 (LRKRNPQGFE) show a composition bias toward basic residues.

Belongs to the ric-3 family. As to quaternary structure, monomer and homodimer. Interacts with CHRNA7, CHRNA3, CHRNA4, CHRNB2, CHRNB4 and HTR3A. Expressed in brain, with highest levels in hippocampus, cerebellum and superior colliculus.

It is found in the endoplasmic reticulum membrane. Functionally, molecular chaperone which promotes the proper subunit assembly and surface trafficking of alpha-7 (CHRNA7) nicotinic acetylcholine receptor. Promotes the proper subunit assembly and cell surface expression of alpha-8 (CHRNA8) nicotinic acetylcholine receptor. May also promote functional expression of homomeric serotoninergic 5-HT3 receptors, and of heteromeric acetylcholine receptors alpha-3/beta-2, alpha-3/beta-4, alpha-4/beta-2 and alpha-4/beta-4. This chain is Protein RIC-3 (Ric3), found in Mus musculus (Mouse).